The sequence spans 361 residues: Protein RecA (361 aa).

77 to 84 (GPESSGKT) serves as a coordination point for ATP.

It belongs to the RecA family.

It is found in the cytoplasm. In terms of biological role, can catalyze the hydrolysis of ATP in the presence of single-stranded DNA, the ATP-dependent uptake of single-stranded DNA by duplex DNA, and the ATP-dependent hybridization of homologous single-stranded DNAs. It interacts with LexA causing its activation and leading to its autocatalytic cleavage. This Brucella abortus (strain S19) protein is Protein RecA.